A 177-amino-acid polypeptide reads, in one-letter code: Adenine phosphoribosyltransferase (177 aa).

This sequence belongs to the purine/pyrimidine phosphoribosyltransferase family. As to quaternary structure, homodimer.

The protein localises to the cytoplasm. It catalyses the reaction AMP + diphosphate = 5-phospho-alpha-D-ribose 1-diphosphate + adenine. It functions in the pathway purine metabolism; AMP biosynthesis via salvage pathway; AMP from adenine: step 1/1. In terms of biological role, catalyzes a salvage reaction resulting in the formation of AMP, that is energically less costly than de novo synthesis. The sequence is that of Adenine phosphoribosyltransferase from Chlorobaculum parvum (strain DSM 263 / NCIMB 8327) (Chlorobium vibrioforme subsp. thiosulfatophilum).